The sequence spans 536 residues: Membrane protein insertase YidC (536 aa).

A helical membrane pass occupies residues 14 to 34; the sequence is ILIATAISLLFFIPYSYFFAP. A disordered region spans residues 43 to 69; it reads STSMERAEQQAAPQTSSSPKEGQVSSV. Residues 53–68 show a composition bias toward polar residues; it reads AAPQTSSSPKEGQVSS. 5 consecutive transmembrane segments (helical) span residues 312 to 332, 339 to 359, 401 to 421, 436 to 456, and 484 to 504; these read VVEYGFITFFAKPLFLLLDWL, WGWAIVLLTLVVRIILFPLTY, GANPMGGCLPLLLQMPIFFAI, WILWINDLSVMDPYFILPILM, and PLIFTFFFVTFPSGLVLYWFV.

The protein belongs to the OXA1/ALB3/YidC family. Type 1 subfamily. Interacts with the Sec translocase complex via SecD. Specifically interacts with transmembrane segments of nascent integral membrane proteins during membrane integration.

It localises to the cell inner membrane. Functionally, required for the insertion and/or proper folding and/or complex formation of integral membrane proteins into the membrane. Involved in integration of membrane proteins that insert both dependently and independently of the Sec translocase complex, as well as at least some lipoproteins. Aids folding of multispanning membrane proteins. The polypeptide is Membrane protein insertase YidC (Wolinella succinogenes (strain ATCC 29543 / DSM 1740 / CCUG 13145 / JCM 31913 / LMG 7466 / NCTC 11488 / FDC 602W) (Vibrio succinogenes)).